The sequence spans 1581 residues: Laminin subunit gamma-3 (1581 aa).

Residues 1–28 (MAVSRVLSLLATVASMALVIQETHFAAG) form the signal peptide. Positions 40–279 (RAQRCLPEFE…AVSDFSVGGR (240 aa)) constitute a Laminin N-terminal domain. N-linked (GlcNAc...) asparagine glycosylation is present at Asn128. Cystine bridges form between Cys280–Cys289, Cys282–Cys299, Cys301–Cys310, Cys313–Cys333, Cys336–Cys345, Cys338–Cys361, Cys364–Cys373, Cys376–Cys389, Cys392–Cys404, Cys394–Cys410, Cys412–Cys421, Cys424–Cys436, Cys439–Cys450, Cys441–Cys457, Cys459–Cys468, and Cys471–Cys486. 4 Laminin EGF-like domains span residues 280–335 (CKCN…ECLP), 336–391 (CNCS…PCQP), 392–438 (CDCH…GCRP), and 439–488 (CACN…GCSS). Asn304 carries N-linked (GlcNAc...) asparagine glycosylation. A glycan (N-linked (GlcNAc...) asparagine) is linked at Asn337. One can recognise a Laminin EGF-like 5; first part domain in the interval 489–498 (CFCYGHSKVC). The region spanning 508 to 684 (HIRSDFRHGA…LAPPASWVET (177 aa)) is the Laminin IV type A domain. Asn640 carries N-linked (GlcNAc...) asparagine glycosylation. The Laminin EGF-like 5; second part domain maps to 685–718 (CLCPQGYTGQFCEFCALGYKREIPHGGPYANCIP). Disulfide bonds link Cys719/Cys727, Cys721/Cys734, Cys736/Cys745, Cys748/Cys764, Cys767/Cys775, Cys769/Cys786, Cys789/Cys798, Cys801/Cys819, Cys822/Cys836, Cys824/Cys843, Cys846/Cys855, Cys858/Cys875, Cys878/Cys891, Cys880/Cys898, Cys900/Cys909, Cys912/Cys925, Cys928/Cys940, Cys930/Cys947, Cys949/Cys958, Cys961/Cys973, Cys976/Cys988, Cys978/Cys994, Cys996/Cys1005, and Cys1008/Cys1021. 6 consecutive Laminin EGF-like domains span residues 719–766 (CTCN…DCQP), 767–821 (CPCP…PCRR), 822–877 (CQCS…KCAP), 878–927 (CSCD…GCQS), 928–975 (CKCH…GCRD), and 976–1024 (CRCS…CQEC). An N-linked (GlcNAc...) asparagine glycan is attached at Asn849. N-linked (GlcNAc...) asparagine glycosylation occurs at Asn991. The domain II and I stretch occupies residues 1025 to 1581 (PTCYALVKEE…LSSLPENCAS (557 aa)). 2 coiled-coil regions span residues 1029–1046 (ALVKEEAAKLKARLMLME) and 1112–1153 (VHCA…LASL). 2 N-linked (GlcNAc...) asparagine glycosylation sites follow: Asn1162 and Asn1196. Residues 1208–1231 (RVASEAQQELEDRYQEVQAAQTAL) are a coiled coil. N-linked (GlcNAc...) asparagine glycosylation occurs at Asn1320. The tract at residues 1382 to 1413 (KRKTKQAERMLGNAASLSSSTKKKSKEAELMS) is disordered. Coiled-coil stretches lie at residues 1438-1468 (ASQTQATLRRASRLLLTSEAHKQELEEAKQV) and 1510-1575 (AQTL…LSSL). An N-linked (GlcNAc...) asparagine glycan is attached at Asn1514.

In terms of assembly, laminin is a complex glycoprotein, consisting of three different polypeptide chains (alpha, beta, gamma), which are bound to each other by disulfide bonds into a cross-shaped molecule comprising one long and three short arms with globules at each end. Gamma-3 is a subunit of laminin-12 (laminin-213), laminin-14 (laminin-423) and laminin-15 (laminin-523). In terms of tissue distribution, strongly expressed in capillaries and arterioles of kidney as well as in interstitial Leydig cells of testis.

The protein resides in the secreted. The protein localises to the extracellular space. It localises to the extracellular matrix. Its subcellular location is the basement membrane. In terms of biological role, binding to cells via a high affinity receptor, laminin is thought to mediate the attachment, migration and organization of cells into tissues during embryonic development by interacting with other extracellular matrix components. The protein is Laminin subunit gamma-3 (Lamc3) of Mus musculus (Mouse).